The primary structure comprises 796 residues: Striatin-3 (796 aa).

Position 1 is an N-acetylmethionine (Met-1). A compositionally biased stretch (gly residues) spans 1–13; the sequence is MDELAGGGGGGQG. The interval 1–60 is disordered; that stretch reads MDELAGGGGGGQGMAAPPRPQQGPGGNLSLPPGANGAPGGGGPPAAEAAGPPAGPELSRP. Residues 71-79 form a caveolin-binding region; the sequence is YIQHEWARF. Residues 77-136 are a coiled coil; the sequence is ARFEMERAHWEVERAELQARIAFLQGERKGQENLKKDLVRRIKMLEYALKQERAKYHKLK. Residue Thr-150 is modified to Phosphothreonine. Residues 166-183 are calmodulin-binding; it reads QNSQLTWKQGRQLLRQYL. Phosphoserine occurs at positions 202, 214, 229, 257, and 334. Disordered regions lie at residues 252 to 271 and 311 to 335; these read ENADDSDEEENDMIEGIPEG and EDGEGAGEARSSGDGTEWDKDDLSP. Positions 253-264 are enriched in acidic residues; sequence NADDSDEEENDM. 6 WD repeats span residues 477–516, 530–569, 583–622, 678–717, 720–759, and 766–795; these read SHFDGVRALAFHPVEPVLVTASEDHTLKLWNLQKTVPAKK, AHIGPVLSLAISSNGEQCFSGGIDATIQWWNMPSPNVDPY, AHTDAVWGLAYSGIKNQLLSCSADGTIRLWNPQEKLPCVC, QSSNHINRVVSHPTLPVTITAHEDRHIKFFDNKTGKMIHS, AHLDAVTSLAVDPNGIYLMSGSHDCSIRLWNLDSKTCVQE, and KLDESIYDVAFHPSKAYIASAGADALAKVF.

It belongs to the WD repeat striatin family. Tetramerizes. Part of the core of STRIPAK complexes composed of PP2A catalytic and scaffolding subunits, the striatins (PP2A regulatory subunits), the striatin-associated proteins MOB4, STRIP1 and STRIP2, PDCD10 and members of the STE20 kinases, such as STK24 and STK26. The STRIPAK complex can be extended by adapter proteins such as SLMAP:SIKE1 or CTTNBP2NL. Interacts with CDC42BPB. As to expression, mainly expressed in the brain and muscles but is also detected at low levels in various tissues such as kidney, spleen and lung.

It localises to the cytoplasm. Its subcellular location is the membrane. Functionally, calmodulin-binding scaffolding protein which is the center of the striatin-interacting phosphatase and kinase (STRIPAK) complexes. STRIPAK complexes have critical roles in protein (de)phosphorylation and are regulators of multiple signaling pathways including Hippo, MAPK, nuclear receptor and cytoskeleton remodeling. Different types of STRIPAK complexes are involved in a variety of biological processes such as cell growth, differentiation, apoptosis, metabolism and immune regulation. The sequence is that of Striatin-3 (Strn3) from Mus musculus (Mouse).